We begin with the raw amino-acid sequence, 505 residues long: Maturase K (505 aa).

Belongs to the intron maturase 2 family. MatK subfamily.

The protein resides in the plastid. It localises to the chloroplast. Its function is as follows. Usually encoded in the trnK tRNA gene intron. Probably assists in splicing its own and other chloroplast group II introns. This chain is Maturase K, found in Blitum bonus-henricus (Good King Henry).